Consider the following 483-residue polypeptide: Glutamyl-tRNA(Gln) amidotransferase subunit A (483 aa).

Catalysis depends on charge relay system residues K76 and S151. The Acyl-ester intermediate role is filled by S175.

Belongs to the amidase family. GatA subfamily. Heterotrimer of A, B and C subunits.

The catalysed reaction is L-glutamyl-tRNA(Gln) + L-glutamine + ATP + H2O = L-glutaminyl-tRNA(Gln) + L-glutamate + ADP + phosphate + H(+). Allows the formation of correctly charged Gln-tRNA(Gln) through the transamidation of misacylated Glu-tRNA(Gln) in organisms which lack glutaminyl-tRNA synthetase. The reaction takes place in the presence of glutamine and ATP through an activated gamma-phospho-Glu-tRNA(Gln). This Pseudomonas putida (strain ATCC 700007 / DSM 6899 / JCM 31910 / BCRC 17059 / LMG 24140 / F1) protein is Glutamyl-tRNA(Gln) amidotransferase subunit A.